Here is a 225-residue protein sequence, read N- to C-terminus: Gene 30 protein (225 aa).

The disordered stretch occupies residues 48–73; it reads RNSELGHPEVKKEETTQQPEKGEGMA. Positions 51-73 are enriched in basic and acidic residues; the sequence is ELGHPEVKKEETTQQPEKGEGMA.

Essential for DNA synthesis. This chain is Gene 30 protein (30), found in Bacillus phage SP01 (Bacteriophage SP01).